Reading from the N-terminus, the 331-residue chain is Major ferric iron-binding protein (331 aa).

An N-terminal signal peptide occupies residues 1–22; it reads MKTSIRYALLAAALTAATPALA. 4 residues coordinate Fe cation: histidine 31, glutamate 79, tyrosine 217, and tyrosine 218.

This sequence belongs to the bacterial solute-binding protein 1 family.

It is found in the periplasm. Its function is as follows. This protein may be a central component in the iron-acquisition system. The sequence is that of Major ferric iron-binding protein (fbpA) from Neisseria meningitidis serogroup A / serotype 4A (strain DSM 15465 / Z2491).